The chain runs to 247 residues: tRNA pseudouridine synthase A (247 aa).

The active-site Nucleophile is the aspartate 52. A substrate-binding site is contributed by tyrosine 113.

This sequence belongs to the tRNA pseudouridine synthase TruA family. As to quaternary structure, homodimer.

It catalyses the reaction uridine(38/39/40) in tRNA = pseudouridine(38/39/40) in tRNA. Formation of pseudouridine at positions 38, 39 and 40 in the anticodon stem and loop of transfer RNAs. The polypeptide is tRNA pseudouridine synthase A (Bartonella henselae (strain ATCC 49882 / DSM 28221 / CCUG 30454 / Houston 1) (Rochalimaea henselae)).